Here is a 108-residue protein sequence, read N- to C-terminus: Phosphoribosyl-AMP cyclohydrolase (108 aa).

Residue aspartate 73 coordinates Mg(2+). Position 74 (cysteine 74) interacts with Zn(2+). Mg(2+)-binding residues include aspartate 75 and aspartate 77. Zn(2+) is bound by residues cysteine 90 and cysteine 97.

The protein belongs to the PRA-CH family. As to quaternary structure, homodimer. It depends on Mg(2+) as a cofactor. Requires Zn(2+) as cofactor.

Its subcellular location is the cytoplasm. The catalysed reaction is 1-(5-phospho-beta-D-ribosyl)-5'-AMP + H2O = 1-(5-phospho-beta-D-ribosyl)-5-[(5-phospho-beta-D-ribosylamino)methylideneamino]imidazole-4-carboxamide. It participates in amino-acid biosynthesis; L-histidine biosynthesis; L-histidine from 5-phospho-alpha-D-ribose 1-diphosphate: step 3/9. Functionally, catalyzes the hydrolysis of the adenine ring of phosphoribosyl-AMP. The chain is Phosphoribosyl-AMP cyclohydrolase from Lactiplantibacillus plantarum (strain ATCC BAA-793 / NCIMB 8826 / WCFS1) (Lactobacillus plantarum).